The sequence spans 506 residues: Phase 2 flagellin (506 aa).

This sequence belongs to the bacterial flagellin family.

It localises to the secreted. It is found in the bacterial flagellum. Flagellin is the subunit protein which polymerizes to form the filaments of bacterial flagella. This is Phase 2 flagellin (fljB) from Salmonella typhimurium (strain LT2 / SGSC1412 / ATCC 700720).